Consider the following 267-residue polypeptide: Protein HesA, heterocyst (267 aa).

This sequence belongs to the HesA/MoeB/ThiF family.

This is Protein HesA, heterocyst (hesA1) from Trichormus variabilis (strain ATCC 29413 / PCC 7937) (Anabaena variabilis).